Consider the following 861-residue polypeptide: Cone cGMP-specific 3',5'-cyclic phosphodiesterase subunit alpha' (861 aa).

GAF domains are found at residues 75 to 224 and 256 to 433; these read SAEQ…AVAL and DVER…GWSL. Residues serine 97, asparagine 116, 169-172, and threonine 176 contribute to the 3',5'-cyclic GMP site; that span reads DKQT. The PDEase domain maps to 486–819; that stretch reads EERQLLAILK…VEWKSLAEEY (334 aa). The Proton donor role is filled by histidine 562. Residues histidine 566, histidine 602, aspartate 603, and aspartate 723 each contribute to the a divalent metal cation site. Basic and acidic residues predominate over residues 826 to 839; the sequence is TEEEAGKQEEEASD. The disordered stretch occupies residues 826–861; that stretch reads TEEEAGKQEEEASDGKAATDLGGSAEDKKSKTCLML. Residue cysteine 858 is modified to Cysteine methyl ester. Cysteine 858 carries the S-geranylgeranyl cysteine lipid modification. Residues 859-861 constitute a propeptide, removed in mature form; sequence LML.

It belongs to the cyclic nucleotide phosphodiesterase family. As to quaternary structure, composed of two alpha' subunits that are associated with 3 smaller proteins of 11, 13, and 15 kDa. It depends on a divalent metal cation as a cofactor.

The protein resides in the cell membrane. The catalysed reaction is 3',5'-cyclic GMP + H2O = GMP + H(+). In terms of biological role, as cone-specific cGMP phosphodiesterase, it plays an essential role in light detection and cone phototransduction by rapidly decreasing intracellular levels of cGMP. This chain is Cone cGMP-specific 3',5'-cyclic phosphodiesterase subunit alpha' (Pde6c), found in Mus musculus (Mouse).